The following is a 66-amino-acid chain: Ribosome biogenesis protein Nop10 (66 aa).

It belongs to the NOP10 family.

Functionally, involved in ribosome biogenesis; more specifically in 18S rRNA pseudouridylation and in cleavage of pre-rRNA. The polypeptide is Ribosome biogenesis protein Nop10 (Staphylothermus marinus (strain ATCC 43588 / DSM 3639 / JCM 9404 / F1)).